The following is a 187-amino-acid chain: MVVGLFGGSFNPPHAGHALVAEIALRRLGLDQLWWMVTPGNPLKSRSELASLEDRIAACERLVSDPRIKVTAFEKSLGISYTANTLAKVKAKNPHVRFIWIMGADNLKSFHRWQKWREIAETFPIAVIDRPGSTLSYLSSTMAQAFSQARIDEDDAGVLWKKKAPAWVFIHGPRSTLSSTALRNNHK.

This sequence belongs to the NadD family.

The catalysed reaction is nicotinate beta-D-ribonucleotide + ATP + H(+) = deamido-NAD(+) + diphosphate. It functions in the pathway cofactor biosynthesis; NAD(+) biosynthesis; deamido-NAD(+) from nicotinate D-ribonucleotide: step 1/1. Catalyzes the reversible adenylation of nicotinate mononucleotide (NaMN) to nicotinic acid adenine dinucleotide (NaAD). The sequence is that of Probable nicotinate-nucleotide adenylyltransferase from Agrobacterium fabrum (strain C58 / ATCC 33970) (Agrobacterium tumefaciens (strain C58)).